The following is a 183-amino-acid chain: tRNA-splicing endonuclease (183 aa).

Catalysis depends on residues Tyr120, His128, and Lys159.

The protein belongs to the tRNA-intron endonuclease family. Archaeal short subfamily. Homotetramer; although the tetramer contains four active sites, only two participate in the cleavage. Therefore, it should be considered as a dimer of dimers.

The catalysed reaction is pretRNA = a 3'-half-tRNA molecule with a 5'-OH end + a 5'-half-tRNA molecule with a 2',3'-cyclic phosphate end + an intron with a 2',3'-cyclic phosphate and a 5'-hydroxyl terminus.. In terms of biological role, endonuclease that removes tRNA introns. Cleaves pre-tRNA at the 5'- and 3'-splice sites to release the intron. The products are an intron and two tRNA half-molecules bearing 2',3' cyclic phosphate and 5'-OH termini. Recognizes a pseudosymmetric substrate in which 2 bulged loops of 3 bases are separated by a stem of 4 bp. The polypeptide is tRNA-splicing endonuclease (Pyrobaculum arsenaticum (strain DSM 13514 / JCM 11321 / PZ6)).